A 231-amino-acid chain; its full sequence is MDKMLLLLGVSILLSEVFAQTDLTGKVFVFPRESESDYVKLIPRLEKPLENFTLCFRTYTDLSRPHSLFSYNTKNKDNELLIYKERMGEYGLYIENLGAIVRGVEEFASPVHFCTSWESSSGIAEFWVNGIPWVKKGLKKGYTVKTQPSIILGQEQDNYGGGFDKSQSFVGEMGDLNMWDSVLTPEEIKSVYEGSWLEANILDWRTLNYEMSGYAVIRPRCVALSSYNKIS.

A signal peptide spans 1 to 19; the sequence is MDKMLLLLGVSILLSEVFA. The region spanning 24–223 is the Pentraxin (PTX) domain; that stretch reads TGKVFVFPRE…YAVIRPRCVA (200 aa). The N-linked (GlcNAc...) asparagine glycan is linked to Asn-51. Cys-55 and Cys-114 are joined by a disulfide. Residues Asp-77, Asn-78, Glu-155, Gln-156, Asp-157, and Gln-167 each coordinate Ca(2+).

It belongs to the pentraxin family. In terms of assembly, homopentamer. Pentraxin (or pentaxin) have a discoid arrangement of 5 non-covalently bound subunits. Ca(2+) is required as a cofactor.

It localises to the secreted. The polypeptide is Female protein (Nothocricetulus migratorius (Gray dwarf hamster)).